The sequence spans 366 residues: Gelsolin-like protein 2 (366 aa).

Gelsolin-like repeat units follow at residues 55-139 (NFKV…DLFL), 177-252 (KHIV…HEFY), and 286-327 (KSTV…AQEK). Positions 100 to 116 (KSTQDEYCVAAYKTVEL) are actin binding. The interval 104 to 107 (DEYC) is actin-actin interfilament contact point.

Belongs to the villin/gelsolin family. Interacts with actin monomers and filaments. Expressed in circular and longitudinal muscle, pseudohearts, pharynx and gizzard. Not expressed in seminal vesicles.

The protein resides in the cytoplasm. It is found in the cytoskeleton. Functionally, calcium-regulated protein that binds to the plus (or barbed) ends of actin monomers or filaments, preventing monomer exchange (end-blocking or capping). Can promote the assembly of monomers into filaments (nucleation) as well as sever existing filaments. The sequence is that of Gelsolin-like protein 2 from Lumbricus terrestris (Common earthworm).